Here is a 637-residue protein sequence, read N- to C-terminus: ATP-dependent zinc metalloprotease FtsH (637 aa).

Residues 1–7 (MNRVFRN) are Cytoplasmic-facing. The helical transmembrane segment at 8 to 28 (TIFYLLILLVVIGVVSYFQTS) threads the bilayer. Residues 29–109 (NPKTENMSYS…VEPAQETSGW (81 aa)) lie on the Extracellular side of the membrane. A helical transmembrane segment spans residues 110–130 (VTFLTTIIPFVIIFILFFFLL). The Cytoplasmic segment spans residues 131-637 (NQAQGGGSRV…TEEKKDDTKE (507 aa)). 201-208 (GPPGTGKT) lines the ATP pocket. Position 423 (His423) interacts with Zn(2+). The active site involves Glu424. The Zn(2+) site is built by His427 and Asp499. Positions 514–637 (FGMSEKLGPL…TEEKKDDTKE (124 aa)) are not necessary for FtsH function.

It in the central section; belongs to the AAA ATPase family. This sequence in the C-terminal section; belongs to the peptidase M41 family. As to quaternary structure, homohexamer. Interacts with FloT at midcell. Interacts with FloA at midcell. Another study shows only minor colocalization with FloA or FloT. Requires Zn(2+) as cofactor.

The protein localises to the cell membrane. It localises to the membrane raft. In terms of biological role, acts as a processive, ATP-dependent zinc metallopeptidase for both cytoplasmic and membrane proteins. Plays a role in the quality control of integral membrane proteins. Functionally, in vitro partially degrades Spo0E, the phosphatase that acts on Spo0A-P. Recognition requires the last 14 residues of Spo0E. Its stabile accumulation requires FlotA and Flot. May degrade EzrA. This chain is ATP-dependent zinc metalloprotease FtsH, found in Bacillus subtilis (strain 168).